The primary structure comprises 1255 residues: DNA-directed RNA polymerase subunit beta' (1255 aa).

Positions 60, 62, 77, and 80 each coordinate Zn(2+). Mg(2+)-binding residues include aspartate 503, aspartate 505, and aspartate 507. 4 residues coordinate Zn(2+): cysteine 875, cysteine 950, cysteine 957, and cysteine 960.

This sequence belongs to the RNA polymerase beta' chain family. In terms of assembly, the RNAP catalytic core consists of 2 alpha, 1 beta, 1 beta' and 1 omega subunit. When a sigma factor is associated with the core the holoenzyme is formed, which can initiate transcription. Mg(2+) is required as a cofactor. The cofactor is Zn(2+).

It catalyses the reaction RNA(n) + a ribonucleoside 5'-triphosphate = RNA(n+1) + diphosphate. Functionally, DNA-dependent RNA polymerase catalyzes the transcription of DNA into RNA using the four ribonucleoside triphosphates as substrates. This chain is DNA-directed RNA polymerase subunit beta', found in Mycoplasma capricolum subsp. capricolum (strain California kid / ATCC 27343 / NCTC 10154).